The chain runs to 382 residues: MKALHFGAGNIGRGFIGKLLADAGIQLTFADVNQVVLDALNARHSYQVHVVGETEQVDTVSGVDAVSSIGDDVVDLIAQVDLVTTAVGPVVLERIAPAIAKGLVKRKEQGNESPLNIIACENMVRGTTQLKGHVMNALPEDAKAWVEEHVGFVDSAVDRIVPPSASATNDPLEVTVETFSEWIVDKTQFKGALPNIPGMELTDNLMAFVERKLFTLNTGHAITAYLGKLAGHQTIRDAILDEKIRAVVKGAMEESGAVLIKRYGFDADKHAAYIQKILGRFENPYLKDDVERVGRQPLRKLSAGDRLIKPLLGTLEYSLPHKNLIQGIAGAMHFRSEDDPQAQELAALIADKGPQAALAQISGLDANSEVVSEAVTAYKAMQ.

Residue 3–14 participates in NAD(+) binding; that stretch reads ALHFGAGNIGRG. Lys269 carries the N6-acetyllysine modification.

Belongs to the mannitol dehydrogenase family.

The catalysed reaction is D-mannitol 1-phosphate + NAD(+) = beta-D-fructose 6-phosphate + NADH + H(+). This Escherichia coli (strain ATCC 8739 / DSM 1576 / NBRC 3972 / NCIMB 8545 / WDCM 00012 / Crooks) protein is Mannitol-1-phosphate 5-dehydrogenase.